Consider the following 205-residue polypeptide: COMM domain-containing protein 8 (205 aa).

The region spanning 139–205 (SLSDFDWKMN…TFDQINEVSF (67 aa)) is the COMM domain.

Belongs to the COMM domain-containing protein 8 family. In terms of assembly, component of the commander complex consisting of the CCC subcomplex and the retriever subcomplex. Component of the CCC subcomplex.

Scaffold protein in the commander complex that is essential for endosomal recycling of transmembrane cargos; the commander complex is composed of the CCC subcomplex and the retriever subcomplex. The chain is COMM domain-containing protein 8 (commd8) from Dictyostelium discoideum (Social amoeba).